We begin with the raw amino-acid sequence, 255 residues long: Putative cysteine-rich repeat secretory protein 10 (255 aa).

An N-terminal signal peptide occupies residues 1 to 26; the sequence is MFSSSVSISILVVVAMQFSFIHNVLS. 2 consecutive Gnk2-homologous domains span residues 33 to 134 and 140 to 252; these read YLQH…EIYT and FKHY…LYPF.

This sequence belongs to the cysteine-rich repeat secretory protein family.

The protein resides in the secreted. This is Putative cysteine-rich repeat secretory protein 10 (CRRSP10) from Arabidopsis thaliana (Mouse-ear cress).